The primary structure comprises 253 residues: Indole-3-glycerol phosphate synthase (253 aa).

This sequence belongs to the TrpC family.

The enzyme catalyses 1-(2-carboxyphenylamino)-1-deoxy-D-ribulose 5-phosphate + H(+) = (1S,2R)-1-C-(indol-3-yl)glycerol 3-phosphate + CO2 + H2O. Its pathway is amino-acid biosynthesis; L-tryptophan biosynthesis; L-tryptophan from chorismate: step 4/5. This Bacillus anthracis (strain A0248) protein is Indole-3-glycerol phosphate synthase.